A 1157-amino-acid polypeptide reads, in one-letter code: uncharacterized protein (1157 aa).

The span at 1-10 shows a compositional bias: basic and acidic residues; that stretch reads MDPHWKRHDS. Disordered regions lie at residues 1–35, 159–233, and 478–498; these read MDPH…QRFG, QTTP…SVEP, and KNQS…GKGP. 2 stretches are compositionally biased toward low complexity: residues 18-31 and 181-197; these read SPSA…PSSA and SAGT…NPNF. Residues 208-228 are compositionally biased toward polar residues; that stretch reads QEWQQSPLESPLSMHSLQESL. The CSD2 domain occupies 501–574; it reads VWFKPSDKRI…KVEYKAILHD (74 aa). The RNB domain maps to 608–921; it reads LRDKLTFMIG…ICVQRQLREA (314 aa). The 58-residue stretch at 973 to 1030 folds into the DIS3L2 C-terminal domain; that stretch reads GLVKHKAFVLAVDQEYIDIVIYEFGLERRISLDLLPLSNCDFNEQKHELYLSWRTNAS. The tract at residues 1084–1113 is disordered; the sequence is YSKARGNDSTSKTAKSSSGNQDISGDGKLH. Residues 1090–1106 are compositionally biased toward polar residues; the sequence is NDSTSKTAKSSSGNQDI.

The protein belongs to the RNR ribonuclease family.

It localises to the cytoplasm. This is an uncharacterized protein from Schizosaccharomyces pombe (strain 972 / ATCC 24843) (Fission yeast).